The following is a 382-amino-acid chain: MNVTKKTSVMEDFTLFEKMSEHEQVVFCNDPDTGLRAIIAIHDTTLGPALGGCRMYPYGSVEEALEDVLRLSKGMSYKCAAADVDFGGGKAVIIGDPQTDKSPELFRAFGQFVESLGGRFYTGTDMGTTMDDFIHAMKETNSIVGVPEAYGGGGDSSVPTAMGVLYGLKATNYMLFGKEDLANASYAIQGLGKVGYKVAEALLEEGAQLFVTDINQQSLQDIQEKAKSTSGSVTVVESTAIYSQEADIFVPCAFGGVINDETIEQLKVKAIAGSANNQLLTEEHGRQLAKKGILYAPDYIINAGGLIQVADELYGVNKERVLAKTARIYDAILETYKQADLDGITTMEAANRMCEQRIRARGKRNHFYTGSVQPKWNIRRSF.

R54 serves as a coordination point for NAD(+). K78 provides a ligand contact to L-phenylalanine. The active-site Proton donor/acceptor is K90. NAD(+)-binding positions include D125, S156, T160, 190–196 (GLGKVGY), 213–214 (DI), 253–254 (AF), and 274–276 (SAN). N276 is a binding site for L-phenylalanine.

Belongs to the Glu/Leu/Phe/Val dehydrogenases family.

The enzyme catalyses L-phenylalanine + NAD(+) + H2O = 3-phenylpyruvate + NH4(+) + NADH + H(+). Its activity is regulated as follows. Activity is not affected by the metal chelating agent EDTA. Addition of 1 mM Mg(2+) results in 15% increase in activity, while the enzyme is strongly inhibited by 1 mM Fe(3+), Fe(2+), Cu(2+), Zn(2+) and Ag(+). Catalyzes the reversible NAD(+)-dependent oxidative deamination of L-phenylalanine to phenylpyruvate. Can also catalyze the oxidative deamination of several other amino acids, with much lower efficiency. Shows activity towards various bulky aromatic alpha-keto acids/esters and (S)-amine alcohols. Can catalyze the amination of 3-(2-chlorophenyl)-2-oxopropionic acid (CPOA) to produce 2-chloro-L-phenylalanine (2-Cl-Phe), a chemical compound used in the pharmaceutical and biotechnology industries. Shows a preference for amination over deamination. This is Phenylalanine dehydrogenase from Bacillus thermotolerans (Quasibacillus thermotolerans).